A 468-amino-acid polypeptide reads, in one-letter code: Abscisic acid 8'-hydroxylase 4 (468 aa).

Residues 4–24 (IWFLVVPILILCLLLVRVIVS) traverse the membrane as a helical segment. Residue C415 participates in heme binding.

This sequence belongs to the cytochrome P450 family. Heme serves as cofactor. Mainly expressed in flowers. Lower expression in siliques, rosette leaves, roots and stems. Not expressed in dry seeds. Expressed in silique envelopes, but not in embryo or endosperm during the seed development.

It localises to the membrane. The catalysed reaction is 2-cis-(+)-abscisate + reduced [NADPH--hemoprotein reductase] + O2 = (+)-8'-hydroxyabscisate + oxidized [NADPH--hemoprotein reductase] + H2O + H(+). The protein operates within plant hormone degradation; abscisic acid degradation. In terms of biological role, involved in the oxidative degradation of abscisic acid, but not in the isomerization of the produced 8'-hydroxyabscisic acid (8'-OH-ABA) to (-)-phaseic acid (PA). This is Abscisic acid 8'-hydroxylase 4 (CYP707A4) from Arabidopsis thaliana (Mouse-ear cress).